A 292-amino-acid chain; its full sequence is MSFDPTGYTLAHEHLHIDLSGFKNNVDCRLDQYAFICQEMNDLMTRGVRNVIEMTNRYMGRNAQFMLDVMRETGINVVACTGYYQDAFFPEHVATRSVQELAQEMVDEIEQGIDGTELKAGIIAEIGTSEGKITPLEEKVFIAAALAHNQTGRPISTHTSFSTMGLEQLALLQAHGVDLSRVTVGHCDLKDNLDNILKMIDLGAYVQFDTIGKNSYYPDEKRIAMLHALRDRGLLNRVMLSMDITRRSHLKANGGYGYDYLLTTFIPQLRQSGFSQADVDVMLRENPSQFFQ.

3 residues coordinate Zn(2+): histidine 12, histidine 14, and glutamate 125. 148–149 (HN) is a binding site for beta-D-glucose. Zn(2+) is bound at residue histidine 158. The beta-D-glucose site is built by glycine 176, aspartate 178, and arginine 181. 2 residues coordinate Zn(2+): histidine 186 and aspartate 243. Residues aspartate 280 and arginine 284 each contribute to the beta-D-glucose site.

Belongs to the metallo-dependent hydrolases superfamily. Phosphotriesterase family. In terms of assembly, monomer. Zn(2+) serves as cofactor.

Its activity is regulated as follows. Activity is higher in the enzyme containing Mn(2+) than that containing Zn(2+). Functionally, catalyzes the hydrolysis of phosphorylated glyceryl acetates in which the presence of a phosphate group is required for the enzymatic hydrolysis. Hydrolyzes a dibutyl glycerol derivative suggesting it acts on phosphoglycerol substrates with a butyrate leaving group. Also active with aromatic acetates and propionates. No activity with various sugar phosphates, with various nitrophenylphosphate or nitrophenylphosphonate derivatives, or with phosphorylated or non-phosphorylated sugar lactones tested. Does not hydrolyze non-phosphorylated carboxyesters with long chain leaving groups. No general esterase, aminopeptidase, sulfatase, phosphatase, carbonic anhydrase, phosphodiesterase, and phosphotriesterase activities detected when tested with the following non-specific substrates: p-nitrophenyl acetate, L-alanine nitroanilide, p-nitrophenyl sulfate, bis(p-nitrophenyl) phosphate, paraoxon, and p-nitrophenyl phosphate. This is Phosphotriesterase homology protein from Escherichia coli (strain K12).